Reading from the N-terminus, the 436-residue chain is Anhydro-N-acetylmuramic acid kinase (436 aa).

32 to 39 (GTSLDGMD) contacts ATP.

This sequence belongs to the anhydro-N-acetylmuramic acid kinase family.

The enzyme catalyses 1,6-anhydro-N-acetyl-beta-muramate + ATP + H2O = N-acetyl-D-muramate 6-phosphate + ADP + H(+). Its pathway is amino-sugar metabolism; 1,6-anhydro-N-acetylmuramate degradation. It functions in the pathway cell wall biogenesis; peptidoglycan recycling. Functionally, catalyzes the specific phosphorylation of 1,6-anhydro-N-acetylmuramic acid (anhMurNAc) with the simultaneous cleavage of the 1,6-anhydro ring, generating MurNAc-6-P. Is required for the utilization of anhMurNAc either imported from the medium or derived from its own cell wall murein, and thus plays a role in cell wall recycling. The protein is Anhydro-N-acetylmuramic acid kinase of Psychrobacter arcticus (strain DSM 17307 / VKM B-2377 / 273-4).